The chain runs to 233 residues: Protein DOUBLE-STRAND BREAK FORMATION (233 aa).

As to quaternary structure, interacts with PRD1; this interaction facilitates a binding to PRD3. Specifically expressed in buds.

Its function is as follows. Required for meiotic double-strand break (DSB) formation, the initial event for meiotic recombination. The polypeptide is Protein DOUBLE-STRAND BREAK FORMATION (Arabidopsis thaliana (Mouse-ear cress)).